The chain runs to 246 residues: Transcription factor A, mitochondrial (246 aa).

Residues 1 to 42 constitute a mitochondrion transit peptide; sequence MAFLRSMWGVLSALGRSGAELCTGCGSRLRSPFSFVYLPRWF. Residues 50–118 constitute a DNA-binding region (HMG box 1); the sequence is PKKPVSSYLR…VYKEEISRFK (69 aa). 3 positions are modified to phosphoserine; by PKA: S55, S56, and S61. T122 bears the Phosphothreonine mark. The HMG box 2 DNA-binding region spans 155–219; it reads PKRPRSAYNV…RYHNEMKSWE (65 aa). S160 bears the Phosphoserine; by PKA mark. Phosphoserine is present on residues S193 and S195.

As to quaternary structure, monomer; binds DNA as a monomer. Homodimer. Component of the mitochondrial transcription initiation complex, composed at least of TFB2M, TFAM and POLRMT. In this complex TFAM recruits POLRMT to the promoter whereas TFB2M induces structural changes in POLRMT to enable promoter opening and trapping of the DNA non-template strand. Upon metabolic stress, forms a complex composed of FOXO3, SIRT3, TFAM and POLRMT. Interacts with TFB1M and TFB2M. Interacts with CLPX; this enhances DNA-binding. Phosphorylation by PKA within the HMG box 1 impairs DNA binding and promotes degradation by the AAA+ Lon protease.

The protein localises to the mitochondrion. Its subcellular location is the mitochondrion matrix. The protein resides in the mitochondrion nucleoid. In terms of biological role, binds to the mitochondrial light strand promoter and functions in mitochondrial transcription regulation. Component of the mitochondrial transcription initiation complex, composed at least of TFB2M, TFAM and POLRMT that is required for basal transcription of mitochondrial DNA. In this complex, TFAM recruits POLRMT to a specific promoter whereas TFB2M induces structural changes in POLRMT to enable promoter opening and trapping of the DNA non-template strand. Required for accurate and efficient promoter recognition by the mitochondrial RNA polymerase. Promotes transcription initiation from the HSP1 and the light strand promoter by binding immediately upstream of transcriptional start sites. Is able to unwind DNA. Bends the mitochondrial light strand promoter DNA into a U-turn shape via its HMG boxes. Required for maintenance of normal levels of mitochondrial DNA. May play a role in organizing and compacting mitochondrial DNA. In Homo sapiens (Human), this protein is Transcription factor A, mitochondrial.